The chain runs to 377 residues: uncharacterized protein (377 aa).

A run of 2 helical transmembrane segments spans residues 71 to 91 (IIAT…LVGS) and 140 to 160 (AEAA…PTLF).

The protein localises to the membrane. This is an uncharacterized protein from Coxiella burnetii (strain RSA 493 / Nine Mile phase I).